A 122-amino-acid chain; its full sequence is Large ribosomal subunit protein uL14 (122 aa).

The protein belongs to the universal ribosomal protein uL14 family. In terms of assembly, part of the 50S ribosomal subunit. Forms a cluster with proteins L3 and L19. In the 70S ribosome, L14 and L19 interact and together make contacts with the 16S rRNA in bridges B5 and B8.

Its function is as follows. Binds to 23S rRNA. Forms part of two intersubunit bridges in the 70S ribosome. This is Large ribosomal subunit protein uL14 from Maridesulfovibrio salexigens (strain ATCC 14822 / DSM 2638 / NCIMB 8403 / VKM B-1763) (Desulfovibrio salexigens).